Here is a 78-residue protein sequence, read N- to C-terminus: Large ribosomal subunit protein bL28 (78 aa).

It belongs to the bacterial ribosomal protein bL28 family.

The polypeptide is Large ribosomal subunit protein bL28 (Marinobacter nauticus (strain ATCC 700491 / DSM 11845 / VT8) (Marinobacter aquaeolei)).